The primary structure comprises 23 residues: Acidic phospholipase A2 Ts-A2 (23 aa).

It depends on Ca(2+) as a cofactor. Post-translationally, contains 7 disulfide bonds. As to expression, expressed by the venom gland.

It is found in the secreted. The enzyme catalyses a 1,2-diacyl-sn-glycero-3-phosphocholine + H2O = a 1-acyl-sn-glycero-3-phosphocholine + a fatty acid + H(+). In terms of biological role, exhibits moderate hydrolytic activities and prefers the anionic micelles (dPPC with deoxycholate) to the zwitterionic micelles (dPPC with Triton X-100). PLA2 catalyzes the calcium-dependent hydrolysis of the 2-acyl groups in 3-sn-phosphoglycerides. The polypeptide is Acidic phospholipase A2 Ts-A2 (Trimeresurus stejnegeri (Chinese green tree viper)).